Here is a 347-residue protein sequence, read N- to C-terminus: NADH-ubiquinone oxidoreductase chain 2 (347 aa).

11 helical membrane passes run 3–23 (PLIF…VMMS), 25–45 (HWLM…PLLM), 59–79 (YFLT…INLL), 96–116 (IIMT…FWVP), 122–144 (ISLS…VLYV), 149–171 (INLD…GGLN), 178–198 (ILAY…VFNP), 202–222 (LLNL…FMVA), 247–267 (IMLS…WMII), 276–296 (ITLA…YMRL), and 326–346 (LPVL…ITLL).

The protein belongs to the complex I subunit 2 family. Core subunit of respiratory chain NADH dehydrogenase (Complex I) which is composed of 45 different subunits. Interacts with TMEM242.

The protein localises to the mitochondrion inner membrane. It carries out the reaction a ubiquinone + NADH + 5 H(+)(in) = a ubiquinol + NAD(+) + 4 H(+)(out). Core subunit of the mitochondrial membrane respiratory chain NADH dehydrogenase (Complex I) which catalyzes electron transfer from NADH through the respiratory chain, using ubiquinone as an electron acceptor. Essential for the catalytic activity and assembly of complex I. The polypeptide is NADH-ubiquinone oxidoreductase chain 2 (Saccopteryx bilineata (Greater white-lined bat)).